The primary structure comprises 120 residues: Large ribosomal subunit protein uL18 (120 aa).

It belongs to the universal ribosomal protein uL18 family. Part of the 50S ribosomal subunit; part of the 5S rRNA/L5/L18/L25 subcomplex. Contacts the 5S and 23S rRNAs.

In terms of biological role, this is one of the proteins that bind and probably mediate the attachment of the 5S RNA into the large ribosomal subunit, where it forms part of the central protuberance. In Rhodopseudomonas palustris (strain BisB5), this protein is Large ribosomal subunit protein uL18.